Here is a 41-residue protein sequence, read N- to C-terminus: Histone H3.2 (41 aa).

Residues 1–41 (MARTKQTARKSTGAKAPRKQLASKAARKSAPATGGIKKPHR) form a disordered region.

The protein belongs to the histone H3 family. As to quaternary structure, the nucleosome is a histone octamer containing two molecules each of H2A, H2B, H3 and H4 assembled in one H3-H4 heterotetramer and two H2A-H2B heterodimers. The octamer wraps approximately 147 bp of DNA.

It is found in the nucleus. It localises to the chromosome. Its function is as follows. Core component of nucleosome. Nucleosomes wrap and compact DNA into chromatin, limiting DNA accessibility to the cellular machineries which require DNA as a template. Histones thereby play a central role in transcription regulation, DNA repair, DNA replication and chromosomal stability. DNA accessibility is regulated via a complex set of post-translational modifications of histones, also called histone code, and nucleosome remodeling. In Tetrahymena australis, this protein is Histone H3.2.